We begin with the raw amino-acid sequence, 273 residues long: Cysteine protease S273R (273 aa).

Catalysis depends on residues histidine 168 and asparagine 187. Glutamine 226 contributes to the substrate binding site. The active-site Nucleophile is the cysteine 232.

It belongs to the peptidase C63 family.

The protein localises to the host cytoplasm. It localises to the virion. Cysteine protease that plays several role during infection including processing of the structural polyprotein or inhibition of the host immune response. Catalyzes the maturation of the pp220 and pp62 polyprotein precursors into core-shell proteins. Plays a role in the disruption of host pyroptosis via specific cleavage of gasdermin D/GSDMD. In addition, strongly decreases the host cGAS-STING signaling by targeting IKBKE via its enzymatic activity. Also impairs host FOXJ1-mediated antiviral effect via degradation of FOXJ1. In African swine fever virus (isolate Tick/Malawi/Lil 20-1/1983) (ASFV), this protein is Cysteine protease S273R.